The primary structure comprises 301 residues: Mas-related G-protein coupled receptor member A6 (301 aa).

Over 1–15 (MHRSISIRILITNLM) the chain is Extracellular. The chain crosses the membrane as a helical span at residues 16 to 36 (IVILGLVGLTGNAIVFWLLLF). Topologically, residues 37–42 (RLRRNA) are cytoplasmic. A helical transmembrane segment spans residues 43-63 (FSIYILNLALADFLFLLCHII). Topologically, residues 64–77 (ASTEHILTFSSPNS) are extracellular. A helical membrane pass occupies residues 78 to 98 (IFINCLYTFRVLLYIAGLNML). Over 99–128 (SAISIERCLSVMCPIWYRCHRPEHTSTVMC) the chain is Cytoplasmic. Residues 129–149 (AMIWVLSLLLCILYRYFCGFL) form a helical membrane-spanning segment. The Extracellular portion of the chain corresponds to 150-163 (DTKYEDDYGCLAMN). Residues 164 to 184 (FLTTAYLMFLFVVLCVSSLAL) traverse the membrane as a helical segment. At 185–203 (LARLFCGAGRMKLTRLYVT) the chain is on the cytoplasmic side. The chain crosses the membrane as a helical span at residues 204 to 224 (ITLTLLVFLLCGLPCGFYWFL). Over 225–240 (LSKIKNVFSVFEFSLY) the chain is Extracellular. The helical transmembrane segment at 241 to 261 (LTSVVLTAINSCANPIIYFFV) threads the bilayer. The Cytoplasmic segment spans residues 262 to 301 (GSFRHRLKHQTLKMVLQSALQDTPETPENMVEMSRNKAEL).

Belongs to the G-protein coupled receptor 1 family. Mas subfamily. Expressed in a subset of sensory neurons that includes nociceptors. Expressed in the subclass of non-peptidergic sensory neurons that are IB4(+) and VR1(-).

It is found in the cell membrane. Orphan receptor. May be a receptor for RFamide-family neuropeptides such as NPFF and NPAF, which are analgesic in vivo. May regulate nociceptor function and/or development, including the sensation or modulation of pain. This Mus musculus (Mouse) protein is Mas-related G-protein coupled receptor member A6 (Mrgpra6).